Here is a 134-residue protein sequence, read N- to C-terminus: Holo-[acyl-carrier-protein] synthase (134 aa).

Mg(2+) contacts are provided by D8 and E57.

The protein belongs to the P-Pant transferase superfamily. AcpS family. Mg(2+) serves as cofactor.

It localises to the cytoplasm. It carries out the reaction apo-[ACP] + CoA = holo-[ACP] + adenosine 3',5'-bisphosphate + H(+). Functionally, transfers the 4'-phosphopantetheine moiety from coenzyme A to a Ser of acyl-carrier-protein. The chain is Holo-[acyl-carrier-protein] synthase from Roseobacter denitrificans (strain ATCC 33942 / OCh 114) (Erythrobacter sp. (strain OCh 114)).